A 321-amino-acid polypeptide reads, in one-letter code: Transmembrane protein 255A (321 aa).

Helical transmembrane passes span 29–49 (VFVT…GMAA), 56–76 (VTVG…LGII), 88–108 (LVAS…CAIV), and 200–220 (TILN…LGGF). The segment covering 279 to 297 (STPSGLSDDPNGQASSFMW) has biased composition (polar residues). The tract at residues 279–300 (STPSGLSDDPNGQASSFMWPSN) is disordered.

This sequence belongs to the TMEM255 family.

The protein localises to the membrane. This Xenopus laevis (African clawed frog) protein is Transmembrane protein 255A (tmem255a).